A 557-amino-acid chain; its full sequence is Selenoprotein N (557 aa).

Residues 1–24 are disordered; that stretch reads MGQARPAARRPHSPDPGAQPAPPR. An N-terminal signal peptide occupies residues 1–42; that stretch reads MGQARPAARRPHSPDPGAQPAPPRRRARALALLGALLAAAAA. The EF-hand domain maps to 67 to 102; it reads VLGTDGLFLFSSLDTDQDMYISPEEFKPIAEKLTGS. A glycan (N-linked (GlcNAc...) asparagine) is linked at Asn156. Residue Sec428 is a non-standard amino acid, selenocysteine. 2 N-linked (GlcNAc...) asparagine glycosylation sites follow: Asn449 and Asn497.

In terms of assembly, interacts with RYR1, RYR2 and RYR3. Post-translationally, N-glycosylated.

The protein localises to the endoplasmic reticulum membrane. Its function is as follows. Plays an important role in cell protection against oxidative stress and in the regulation of redox-related calcium homeostasis. Regulates the calcium level of the ER by protecting the calcium pump ATP2A2 against the oxidoreductase ERO1A-mediated oxidative damage. Within the ER, ERO1A activity increases the concentration of H(2)O(2), which attacks the luminal thiols in ATP2A2 and thus leads to cysteinyl sulfenic acid formation (-SOH) and SEPN1 reduces the SOH back to free thiol (-SH), thus restoring ATP2A2 activity. Acts as a modulator of ryanodine receptor (RyR) activity: protects RyR from oxidation due to increased oxidative stress, or directly controls the RyR redox state, regulating the RyR-mediated calcium mobilization required for normal muscle development and differentiation. Essential for muscle regeneration and satellite cell maintenance in skeletal muscle. This is Selenoprotein N from Mus musculus (Mouse).